The following is a 905-amino-acid chain: DNA gyrase subunit A (905 aa).

Residues 35–524 (IPDVRDGLKP…GEFDQDIEDL (490 aa)) enclose the Topo IIA-type catalytic domain. The active-site O-(5'-phospho-DNA)-tyrosine intermediate is tyrosine 123. The short motif at 551–557 (QKRGGKG) is the GyrA-box element.

Belongs to the type II topoisomerase GyrA/ParC subunit family. As to quaternary structure, heterotetramer, composed of two GyrA and two GyrB chains. In the heterotetramer, GyrA contains the active site tyrosine that forms a transient covalent intermediate with DNA, while GyrB binds cofactors and catalyzes ATP hydrolysis.

It localises to the cytoplasm. It catalyses the reaction ATP-dependent breakage, passage and rejoining of double-stranded DNA.. A type II topoisomerase that negatively supercoils closed circular double-stranded (ds) DNA in an ATP-dependent manner to modulate DNA topology and maintain chromosomes in an underwound state. Negative supercoiling favors strand separation, and DNA replication, transcription, recombination and repair, all of which involve strand separation. Also able to catalyze the interconversion of other topological isomers of dsDNA rings, including catenanes and knotted rings. Type II topoisomerases break and join 2 DNA strands simultaneously in an ATP-dependent manner. The chain is DNA gyrase subunit A from Rickettsia typhi (strain ATCC VR-144 / Wilmington).